The chain runs to 72 residues: ATP synthase subunit c (72 aa).

2 helical membrane-spanning segments follow: residues 1 to 21 (MSLG…GAGI) and 49 to 69 (FIGV…AFIV).

The protein belongs to the ATPase C chain family. In terms of assembly, F-type ATPases have 2 components, F(1) - the catalytic core - and F(0) - the membrane proton channel. F(1) has five subunits: alpha(3), beta(3), gamma(1), delta(1), epsilon(1). F(0) has three main subunits: a(1), b(2) and c(10-14). The alpha and beta chains form an alternating ring which encloses part of the gamma chain. F(1) is attached to F(0) by a central stalk formed by the gamma and epsilon chains, while a peripheral stalk is formed by the delta and b chains.

It is found in the cell membrane. Its function is as follows. F(1)F(0) ATP synthase produces ATP from ADP in the presence of a proton or sodium gradient. F-type ATPases consist of two structural domains, F(1) containing the extramembraneous catalytic core and F(0) containing the membrane proton channel, linked together by a central stalk and a peripheral stalk. During catalysis, ATP synthesis in the catalytic domain of F(1) is coupled via a rotary mechanism of the central stalk subunits to proton translocation. In terms of biological role, key component of the F(0) channel; it plays a direct role in translocation across the membrane. A homomeric c-ring of between 10-14 subunits forms the central stalk rotor element with the F(1) delta and epsilon subunits. This Bacillus cytotoxicus (strain DSM 22905 / CIP 110041 / 391-98 / NVH 391-98) protein is ATP synthase subunit c.